A 447-amino-acid chain; its full sequence is UPF0210 protein LAF_0976 (447 aa).

It belongs to the UPF0210 family. In terms of assembly, homodimer.

The chain is UPF0210 protein LAF_0976 from Limosilactobacillus fermentum (strain NBRC 3956 / LMG 18251) (Lactobacillus fermentum).